Here is a 347-residue protein sequence, read N- to C-terminus: Dihydroorotase (347 aa).

2 residues coordinate Zn(2+): histidine 17 and histidine 19. Residues 19-21 (HLR) and asparagine 45 contribute to the substrate site. Residues lysine 103, histidine 140, and histidine 178 each contribute to the Zn(2+) site. At lysine 103 the chain carries N6-carboxylysine. Position 140 (histidine 140) interacts with substrate. Residue leucine 223 participates in substrate binding. Residue aspartate 251 coordinates Zn(2+). Residue aspartate 251 is part of the active site. The substrate site is built by histidine 255 and alanine 267.

It belongs to the metallo-dependent hydrolases superfamily. DHOase family. Class II DHOase subfamily. As to quaternary structure, homodimer. Requires Zn(2+) as cofactor.

The catalysed reaction is (S)-dihydroorotate + H2O = N-carbamoyl-L-aspartate + H(+). The protein operates within pyrimidine metabolism; UMP biosynthesis via de novo pathway; (S)-dihydroorotate from bicarbonate: step 3/3. In terms of biological role, catalyzes the reversible cyclization of carbamoyl aspartate to dihydroorotate. In Citrobacter koseri (strain ATCC BAA-895 / CDC 4225-83 / SGSC4696), this protein is Dihydroorotase.